A 2007-amino-acid chain; its full sequence is Structural maintenance of chromosomes flexible hinge domain-containing protein 1 (2007 aa).

Position 2 is an N-acetylalanine (A2). Residues 111-702 (TKERIDFLPH…LSVTWPEGDE (592 aa)) are ATPase activity domain. At S833 the chain carries Phosphoserine. K1350 bears the N6-acetyllysine mark. Residue K1375 forms a Glycyl lysine isopeptide (Lys-Gly) (interchain with G-Cter in SUMO2) linkage. Phosphothreonine is present on T1500. One can recognise an SMC hinge domain in the interval 1721–1848 (GDILGKIAHL…DNLDAANHYR (128 aa)). An N6-succinyllysine modification is found at K1803. A Phosphoserine modification is found at S1975. The disordered stretch occupies residues 1984-2007 (PIPTKRMRRESTRQNRRPKGDVPN).

Belongs to the SMC family. Highly divergent. In terms of assembly, homodimer; homodimerizes via its SMC hinge domain. Interacts with LRIF1. In terms of processing, sumoylated with SUMO1. As to expression, during embryogenesis, specifically expressed in immature olfactory sensory neurons.

Its subcellular location is the chromosome. It carries out the reaction ATP + H2O = ADP + phosphate + H(+). Its function is as follows. Non-canonical member of the structural maintenance of chromosomes (SMC) protein family that plays a key role in epigenetic silencing by regulating chromatin architecture. Promotes heterochromatin formation in both autosomes and chromosome X, probably by mediating the merge of chromatin compartments. Plays a key role in chromosome X inactivation in females by promoting the spreading of heterochromatin. Recruited to inactivated chromosome X by Xist RNA and acts by mediating the merge of chromatin compartments: promotes random chromatin interactions that span the boundaries of existing structures, leading to create a compartment-less architecture typical of inactivated chromosome X. Required to facilitate Xist RNA spreading. Also required for silencing of a subset of clustered autosomal loci in somatic cells, such as the DUX4 locus. Has ATPase activity; may participate in structural manipulation of chromatin in an ATP-dependent manner as part of its role in gene expression regulation. Also plays a role in DNA repair: localizes to sites of DNA double-strand breaks in response to DNA damage to promote the repair of DNA double-strand breaks. Acts by promoting non-homologous end joining (NHEJ) and inhibiting homologous recombination (HR) repair. Required during preimplantation development, probably acts by regulating chromatin architecture. The sequence is that of Structural maintenance of chromosomes flexible hinge domain-containing protein 1 from Mus musculus (Mouse).